The sequence spans 158 residues: MGRFISVSFGLLVVFLSLSGTGADFDCPSGWSAYDWYCYKPFNEPQTWDDAERFCTEQAKGGHLVSIESSGEADFVGQLVSENIQRPEIYVWIGLRDRRKEQQCSSEWSDGTSIIYVNWNKGESQMCQGLSKWTNFLKWDNTDCQAKNPFVCKFPPQC.

A signal peptide spans 1–23 (MGRFISVSFGLLVVFLSLSGTGA). Cystine bridges form between cysteine 27-cysteine 38, cysteine 55-cysteine 152, and cysteine 127-cysteine 144. In terms of domain architecture, C-type lectin spans 34 to 153 (YDWYCYKPFN…CQAKNPFVCK (120 aa)).

Belongs to the snaclec family. In terms of assembly, heteromultimer; disulfide-linked. As to expression, expressed by the venom gland.

Its subcellular location is the secreted. Functionally, interferes with one step of hemostasis (modulation of platelet aggregation, or coagulation cascade, for example). The sequence is that of Snaclec stejaggregin-A subunit alpha from Trimeresurus stejnegeri (Chinese green tree viper).